The following is a 238-amino-acid chain: Urease subunit alpha (238 aa).

Residues 1–102 (MKLTPKELDK…LVTVHTPIES (102 aa)) form a urease gamma region. The urease beta stretch occupies residues 103–238 (KGKLVPGELF…DDNYVKTIKE (136 aa)).

The protein in the N-terminal section; belongs to the urease gamma subunit family. This sequence in the C-terminal section; belongs to the urease beta subunit family. As to quaternary structure, heterohexamer of 3 UreA (alpha) and 3 UreB (beta) subunits.

It is found in the cytoplasm. The catalysed reaction is urea + 2 H2O + H(+) = hydrogencarbonate + 2 NH4(+). The protein operates within nitrogen metabolism; urea degradation; CO(2) and NH(3) from urea (urease route): step 1/1. The polypeptide is Urease subunit alpha (Helicobacter acinonychis (strain Sheeba)).